We begin with the raw amino-acid sequence, 282 residues long: HTH-type transcriptional activator RhaR (282 aa).

In terms of domain architecture, HTH araC/xylS-type spans 179–277 (DKLITALANS…GMTPSQWRHL (99 aa)). 2 consecutive DNA-binding regions (H-T-H motif) follow at residues 196–217 (DAFC…RAQT) and 244–267 (VSEI…TRET).

In terms of assembly, binds DNA as a dimer.

The protein localises to the cytoplasm. Its function is as follows. Activates expression of the rhaSR operon in response to L-rhamnose. The polypeptide is HTH-type transcriptional activator RhaR (Salmonella choleraesuis (strain SC-B67)).